The primary structure comprises 445 residues: Sporulation-specific glucan 1,3-beta-glucosidase (445 aa).

Residues 1–21 form the signal peptide; the sequence is MVSFRGLTTLTLLFTKLVNCN. Residue asparagine 201 is glycosylated (N-linked (GlcNAc...) asparagine). The active-site Proton donor is glutamate 233. The active-site Nucleophile is glutamate 335.

It belongs to the glycosyl hydrolase 5 (cellulase A) family.

It localises to the secreted. It catalyses the reaction Successive hydrolysis of beta-D-glucose units from the non-reducing ends of (1-&gt;3)-beta-D-glucans, releasing alpha-glucose.. In terms of biological role, probably involved in the processes of spore formation and contributes to ascospore thermoresistance by participating in the morphogenesis of ascospore walls. The enzyme may do this by modifying glucan linkages in the developing ascospore wall, thus strengthening it or lending it plasticity. The sequence is that of Sporulation-specific glucan 1,3-beta-glucosidase (SPR1) from Saccharomyces cerevisiae (strain ATCC 204508 / S288c) (Baker's yeast).